A 161-amino-acid chain; its full sequence is Allophycocyanin alpha chain (161 aa).

Asparagine 71 is modified (N4-methylasparagine). Cysteine 81 is a binding site for (2R,3E)-phycocyanobilin.

Belongs to the phycobiliprotein family. As to quaternary structure, heterodimer of an alpha and a beta chain. Contains one covalently linked phycocyanobilin chromophore.

The protein localises to the cellular thylakoid membrane. Functionally, light-harvesting photosynthetic bile pigment-protein from the phycobiliprotein complex. Allophycocyanin has a maximum absorption at approximately 650 nanometers. In Synechocystis sp. (strain ATCC 27184 / PCC 6803 / Kazusa), this protein is Allophycocyanin alpha chain (apcA).